A 503-amino-acid polypeptide reads, in one-letter code: TGF-beta receptor type-1 (503 aa).

A signal peptide spans 1–29; it reads MEVAAGAPRSRLLLFVLAATATLAPEATA. The Extracellular portion of the chain corresponds to 30–126; it reads FQCFCHLCTK…PPSGLGPVEL (97 aa). Cystine bridges form between Cys-32/Cys-50, Cys-34/Cys-37, Cys-44/Cys-67, Cys-82/Cys-96, and Cys-97/Cys-102. N-linked (GlcNAc...) asparagine glycosylation is present at Asn-41. A helical membrane pass occupies residues 127–147; the sequence is AAVIAGPVCFVCISLMLMVYI. Topologically, residues 148–503 are cytoplasmic; the sequence is CHNRTVIHHR…QLSQQEGIKM (356 aa). Ser-165 is subject to Phosphoserine. The region spanning 175–204 is the GS domain; it reads TTLKDLIYDMTTSGSGSGLPLLVQRTIART. Phosphothreonine; by TGFBR2 occurs at positions 185 and 186. Phosphoserine; by TGFBR2 occurs at positions 187, 189, and 191. Positions 193 to 194 match the FKBP1A-binding motif; the sequence is LP. The Protein kinase domain occupies 205–495; the sequence is IVLQESIGKG…LRIKKTLSQL (291 aa). ATP is bound by residues 211-219 and Lys-232; that span reads IGKGRFGEV. Residue Asp-333 is the Proton acceptor of the active site. Lys-391 participates in a covalent cross-link: Glycyl lysine isopeptide (Lys-Gly) (interchain with G-Cter in SUMO).

Belongs to the protein kinase superfamily. TKL Ser/Thr protein kinase family. TGFB receptor subfamily. Homodimer; in the endoplasmic reticulum but also at the cell membrane. Heterohexamer; TGFB1, TGFB2 and TGFB3 homodimeric ligands assemble a functional receptor composed of two TGFBR1 and TGFBR2 heterodimers to form a ligand-receptor heterohexamer. The respective affinity of TGBRB1 and TGFBR2 for the ligands may modulate the kinetics of assembly of the receptor and may explain the different biological activities of TGFB1, TGFB2 and TGFB3. Component of a complex composed of TSC22D1 (via N-terminus), TGFBR1 and TGFBR2; the interaction between TSC22D1 and TGFBR1 is inhibited by SMAD7 and promoted by TGFB1. Interacts with CD109; inhibits TGF-beta receptor activation in keratinocytes. Interacts with RBPMS. Interacts (unphosphorylated) with FKBP1A; prevents TGFBR1 phosphorylation by TGFBR2 and stabilizes it in the inactive conformation. Interacts with SMAD2, SMAD3 and ZFYVE9; ZFYVE9 recruits SMAD2 and SMAD3 to the TGF-beta receptor. Interacts with TRAF6 and MAP3K7; induces MAP3K7 activation by TRAF6. Interacts with PARD6A; involved in TGF-beta induced epithelial to mesenchymal transition. Interacts with NEDD4L. Interacts with SMAD7, SMURF1 and SMURF2; SMAD7 recruits NEDD4L, SMURF1 and SMURF2 to the TGF-beta receptor. Interacts with USP15 and VPS39. Interacts with SDCBP (via C-terminus). Interacts with CAV1 and this interaction is impaired in the presence of SDCBP. Interacts with APPL1; interaction is TGF beta dependent; mediates trafficking of the TGFBR1 from the endosomes to the nucleus via microtubules in a TRAF6-dependent manner. Interacts with GPR50; this interaction promotes the constitutive activation of SMAD signaling pathway. Requires Mg(2+) as cofactor. Mn(2+) serves as cofactor. Phosphorylated at basal levels in the absence of ligand. Activated upon phosphorylation by TGFBR2, mainly in the GS domain. Phosphorylation in the GS domain abrogates FKBP1A-binding. In terms of processing, N-Glycosylated. Post-translationally, ubiquitinated; undergoes ubiquitination catalyzed by several E3 ubiquitin ligases including SMURF1, SMURF2 and NEDD4L2. Results in the proteasomal and/or lysosomal degradation of the receptor thereby negatively regulating its activity. Deubiquitinated by USP15, leading to stabilization of the protein and enhanced TGF-beta signal. Its ubiquitination and proteasome-mediated degradation is negatively regulated by SDCBP.

It localises to the cell membrane. Its subcellular location is the cell junction. The protein localises to the tight junction. It is found in the membrane raft. The protein resides in the cell surface. It catalyses the reaction L-threonyl-[receptor-protein] + ATP = O-phospho-L-threonyl-[receptor-protein] + ADP + H(+). The enzyme catalyses L-seryl-[receptor-protein] + ATP = O-phospho-L-seryl-[receptor-protein] + ADP + H(+). Kept in an inactive conformation by FKBP1A preventing receptor activation in absence of ligand. CD109 is another inhibitor of the receptor. Transmembrane serine/threonine kinase forming with the TGF-beta type II serine/threonine kinase receptor, TGFBR2, the non-promiscuous receptor for the TGF-beta cytokines TGFB1, TGFB2 and TGFB3. Transduces the TGFB1, TGFB2 and TGFB3 signal from the cell surface to the cytoplasm and is thus regulating a plethora of physiological and pathological processes including cell cycle arrest in epithelial and hematopoietic cells, control of mesenchymal cell proliferation and differentiation, wound healing, extracellular matrix production, immunosuppression and carcinogenesis. The formation of the receptor complex composed of 2 TGFBR1 and 2 TGFBR2 molecules symmetrically bound to the cytokine dimer results in the phosphorylation and the activation of TGFBR1 by the constitutively active TGFBR2. Activated TGFBR1 phosphorylates SMAD2 which dissociates from the receptor and interacts with SMAD4. The SMAD2-SMAD4 complex is subsequently translocated to the nucleus where it modulates the transcription of the TGF-beta-regulated genes. This constitutes the canonical SMAD-dependent TGF-beta signaling cascade. Also involved in non-canonical, SMAD-independent TGF-beta signaling pathways. For instance, TGFBR1 induces TRAF6 autoubiquitination which in turn results in MAP3K7 ubiquitination and activation to trigger apoptosis. Also regulates epithelial to mesenchymal transition through a SMAD-independent signaling pathway through PARD6A phosphorylation and activation. The chain is TGF-beta receptor type-1 (TGFBR1) from Sus scrofa (Pig).